We begin with the raw amino-acid sequence, 160 residues long: Cyclic pyranopterin monophosphate synthase (160 aa).

Residues 74–76 (LSH) and 112–113 (ME) each bind substrate. D127 is a catalytic residue.

This sequence belongs to the MoaC family. Homohexamer; trimer of dimers.

The enzyme catalyses (8S)-3',8-cyclo-7,8-dihydroguanosine 5'-triphosphate = cyclic pyranopterin phosphate + diphosphate. It functions in the pathway cofactor biosynthesis; molybdopterin biosynthesis. In terms of biological role, catalyzes the conversion of (8S)-3',8-cyclo-7,8-dihydroguanosine 5'-triphosphate to cyclic pyranopterin monophosphate (cPMP). In Trichlorobacter lovleyi (strain ATCC BAA-1151 / DSM 17278 / SZ) (Geobacter lovleyi), this protein is Cyclic pyranopterin monophosphate synthase.